Consider the following 240-residue polypeptide: UDP-2,3-diacylglucosamine hydrolase (240 aa).

Residues aspartate 8, histidine 10, aspartate 41, asparagine 79, and histidine 114 each coordinate Mn(2+). 79-80 (NR) contributes to the substrate binding site. Positions 122, 160, 164, 167, and 195 each coordinate substrate. The Mn(2+) site is built by histidine 195 and histidine 197.

This sequence belongs to the LpxH family. The cofactor is Mn(2+).

It is found in the cell inner membrane. The catalysed reaction is UDP-2-N,3-O-bis[(3R)-3-hydroxytetradecanoyl]-alpha-D-glucosamine + H2O = 2-N,3-O-bis[(3R)-3-hydroxytetradecanoyl]-alpha-D-glucosaminyl 1-phosphate + UMP + 2 H(+). It participates in glycolipid biosynthesis; lipid IV(A) biosynthesis; lipid IV(A) from (3R)-3-hydroxytetradecanoyl-[acyl-carrier-protein] and UDP-N-acetyl-alpha-D-glucosamine: step 4/6. Its function is as follows. Hydrolyzes the pyrophosphate bond of UDP-2,3-diacylglucosamine to yield 2,3-diacylglucosamine 1-phosphate (lipid X) and UMP by catalyzing the attack of water at the alpha-P atom. Involved in the biosynthesis of lipid A, a phosphorylated glycolipid that anchors the lipopolysaccharide to the outer membrane of the cell. The polypeptide is UDP-2,3-diacylglucosamine hydrolase (Escherichia coli O7:K1 (strain IAI39 / ExPEC)).